A 430-amino-acid polypeptide reads, in one-letter code: Histidine--tRNA ligase (430 aa).

Belongs to the class-II aminoacyl-tRNA synthetase family. Homodimer.

It is found in the cytoplasm. The enzyme catalyses tRNA(His) + L-histidine + ATP = L-histidyl-tRNA(His) + AMP + diphosphate + H(+). The protein is Histidine--tRNA ligase of Chlamydia felis (strain Fe/C-56) (Chlamydophila felis).